A 314-amino-acid chain; its full sequence is DNA-directed RNA polymerase subunit alpha (314 aa).

The interval 1-228 is alpha N-terminal domain (alpha-NTD); sequence MIEIEKPRIE…EHLNIFVGLT (228 aa). The segment at 245 to 314 is alpha C-terminal domain (alpha-CTD); the sequence is KEKVLEMSIE…DLGLGLRKED (70 aa).

This sequence belongs to the RNA polymerase alpha chain family. In terms of assembly, homodimer. The RNAP catalytic core consists of 2 alpha, 1 beta, 1 beta' and 1 omega subunit. When a sigma factor is associated with the core the holoenzyme is formed, which can initiate transcription.

It catalyses the reaction RNA(n) + a ribonucleoside 5'-triphosphate = RNA(n+1) + diphosphate. Functionally, DNA-dependent RNA polymerase catalyzes the transcription of DNA into RNA using the four ribonucleoside triphosphates as substrates. This is DNA-directed RNA polymerase subunit alpha from Staphylococcus saprophyticus subsp. saprophyticus (strain ATCC 15305 / DSM 20229 / NCIMB 8711 / NCTC 7292 / S-41).